Here is a 631-residue protein sequence, read N- to C-terminus: Polyadenylate-binding protein, cytoplasmic and nuclear (631 aa).

The disordered stretch occupies residues 1–56 (MSDLQESLEKLSINEKAPQAPADDATPSNTTTLEKESSESAAAAAGEGAGEEGEEA). RRM domains are found at residues 58-136 (ASLY…WSQR), 146-223 (GNIF…KHVS), 239-316 (TNVY…RAQK), and 342-419 (VNLF…LAQR). A disordered region spans residues 518 to 545 (GGEFNGPNGQRQQRGAYPPNRNQKGGRP). The PABC domain maps to 545 to 626 (PQRDLAAIIS…ALTAFEEYKK (82 aa)).

The protein belongs to the polyadenylate-binding protein type-1 family.

The protein localises to the cytoplasm. It is found in the nucleus. Binds the poly(A) tail of mRNA. Appears to be an important mediator of the multiple roles of the poly(A) tail in mRNA biogenesis, stability and translation. In the nucleus, involved in both mRNA cleavage and polyadenylation. Is also required for efficient mRNA export to the cytoplasm. Acts in concert with a poly(A)-specific nuclease (PAN) to affect poly(A) tail shortening, which may occur concomitantly with either nucleocytoplasmic mRNA transport or translational initiation. In the cytoplasm, stimulates translation initiation and regulates mRNA decay through translation termination-coupled poly(A) shortening, probably mediated by PAN. This is Polyadenylate-binding protein, cytoplasmic and nuclear (PAB1) from Meyerozyma guilliermondii (strain ATCC 6260 / CBS 566 / DSM 6381 / JCM 1539 / NBRC 10279 / NRRL Y-324) (Yeast).